The following is a 525-amino-acid chain: Peptide chain release factor 3 (525 aa).

A tr-type G domain is found at 9-276 (AKRRTFAIIS…GFTRYAPAPQ (268 aa)). GTP is bound by residues 18 to 25 (SHPDAGKT), 86 to 90 (DTPGH), and 140 to 143 (NKFD).

It belongs to the TRAFAC class translation factor GTPase superfamily. Classic translation factor GTPase family. PrfC subfamily.

The protein localises to the cytoplasm. Increases the formation of ribosomal termination complexes and stimulates activities of RF-1 and RF-2. It binds guanine nucleotides and has strong preference for UGA stop codons. It may interact directly with the ribosome. The stimulation of RF-1 and RF-2 is significantly reduced by GTP and GDP, but not by GMP. In Francisella tularensis subsp. tularensis (strain FSC 198), this protein is Peptide chain release factor 3.